The sequence spans 545 residues: 2-succinyl-5-enolpyruvyl-6-hydroxy-3-cyclohexene-1-carboxylate synthase (545 aa).

The protein belongs to the TPP enzyme family. MenD subfamily. In terms of assembly, homodimer. It depends on Mg(2+) as a cofactor. Requires Mn(2+) as cofactor. Thiamine diphosphate serves as cofactor.

The enzyme catalyses isochorismate + 2-oxoglutarate + H(+) = 5-enolpyruvoyl-6-hydroxy-2-succinyl-cyclohex-3-ene-1-carboxylate + CO2. The protein operates within quinol/quinone metabolism; 1,4-dihydroxy-2-naphthoate biosynthesis; 1,4-dihydroxy-2-naphthoate from chorismate: step 2/7. Its pathway is quinol/quinone metabolism; menaquinone biosynthesis. Its function is as follows. Catalyzes the thiamine diphosphate-dependent decarboxylation of 2-oxoglutarate and the subsequent addition of the resulting succinic semialdehyde-thiamine pyrophosphate anion to isochorismate to yield 2-succinyl-5-enolpyruvyl-6-hydroxy-3-cyclohexene-1-carboxylate (SEPHCHC). This Nocardia farcinica (strain IFM 10152) protein is 2-succinyl-5-enolpyruvyl-6-hydroxy-3-cyclohexene-1-carboxylate synthase.